We begin with the raw amino-acid sequence, 949 residues long: MQKLLSLPSNLVQSFHELERVNRTDWFCTSDPVGKKLGSGGGTSWLLEECYNEYSDGATFGEWLEKEKRILLHAGGQSRRLPGYAPSGKILTPVPVFRWERGQHLGQNLLSLQLPLYEKIMSLAPDKLHTLIASGDVYIRSEKPLQSIPEADVVCYGLWVDPSLATHHGVFASDRKHPEQLDFMLQKPSLAELESLSKTHLFLMDIGIWLLSDRAVEILMKRSHKESSEELKYYDLYSDFGLALGTHPRIEDEEVNTLSVAILPLPGGEFYHYGTSKELISSTLSVQNKVYDQRRIMHRKVKPNPAMFVQNAVVRIPLCAENADLWIENSHIGPKWKIASRHIITGVPENDWSLAVPAGVCVDVVPMGDKGFVARPYGLDDVFKGDLRDSKTTLTGIPFGEWMSKRGLSYTDLKGRTDDLQAVSVFPMVNSVEELGLVLRWMLSEPELEEGKNIWLRSEHFSADEISAGANLKRLYAQREEFRKGNWKALAVNHEKSVFYQLDLADAAEDFVRLGLDMPELLPEDALQMSRIHNRMLRARILKLDGKDYRPEEQAAFDLLRDGLLDGISNRKSTPKLDVYSDQIVWGRSPVRIDMAGGWTDTPPYSLYSGGNVVNLAIELNGQPPLQVYVKPCKDFHIVLRSIDMGAMEIVSTFDELQDYKKIGSPFSIPKAALSLAGFAPAFSAVSYASLEEQLKDFGAGIEVTLLAAIPAGSGLGTSSILASTVLGAINDFCGLAWDKNEICQRTLVLEQLLTTGGGWQDQYGGVLQGVKLLQTEAGFAQSPLVRWLPDHLFTHPEYKDCHLLYYTGITRTAKGILAEIVSSMFLNSSLHLNLLSEMKAHALDMNEAIQRGSFVEFGRLVGKTWEQNKALDSGTNPPAVEAIIDLIKDYTLGYKLPGAGGGGYLYMVAKDPQAAVRIRKILTENAPNPRARFVEMTLSDKGFQVSRS.

Residues 25-191 (DWFCTSDPVG…DFMLQKPSLA (167 aa)) form a fucose-1-phosphate guanylyltransferase region. Residues 559–949 (LLRDGLLDGI…SDKGFQVSRS (391 aa)) form an L-fucokinase region.

The protein belongs to the GHMP kinase family. In terms of assembly, homotetramer. Mn(2+) is required as a cofactor. It depends on Mg(2+) as a cofactor.

The catalysed reaction is L-fucose + ATP = beta-L-fucose 1-phosphate + ADP + H(+). It carries out the reaction beta-L-fucose 1-phosphate + GTP + H(+) = GDP-beta-L-fucose + diphosphate. Bifunctional enzyme involved in the salvage pathway of GDP-fucose synthesis. Catalyzes two successive reactions, the ATP-dependent phosphorylation of L-fucose to L-fucose 1-phosphate, and its guanylylation to GDP-L-fucose. GDP-fucose is an important fucose donor in the process of fucosylated oligosaccharides formation. The polypeptide is L-fucokinase/L-fucose-1-P guanylyltransferase (Bacteroides fragilis).